We begin with the raw amino-acid sequence, 384 residues long: Polar flagellin C (384 aa).

The stretch at 317–347 (AKQNRLSHSINNLANIQENVDASNSRIKDTD) forms a coiled coil.

This sequence belongs to the bacterial flagellin family. In terms of assembly, heteromer of multiple flagellin subunits including FlaA, FlaB/D, FlaC, FlaE and FlaF. Homomer of FlaC is not able to form a functional filament.

The protein localises to the secreted. It is found in the bacterial flagellum. In terms of biological role, flagellin is the subunit protein which polymerizes to form the filaments of bacterial flagella. FlaC is not essential for polar flagellar synthesis and swimming motility. Homomer of FlaC is not able to form a functional filament. The chain is Polar flagellin C (flaC) from Vibrio parahaemolyticus serotype O3:K6 (strain RIMD 2210633).